Here is a 352-residue protein sequence, read N- to C-terminus: Heat-inducible transcription repressor HrcA (352 aa).

This sequence belongs to the HrcA family.

In terms of biological role, negative regulator of class I heat shock genes (grpE-dnaK-dnaJ and groELS operons). Prevents heat-shock induction of these operons. This Chlorobium phaeobacteroides (strain BS1) protein is Heat-inducible transcription repressor HrcA.